The primary structure comprises 320 residues: Aspartate carbamoyltransferase catalytic subunit (320 aa).

R57 and T58 together coordinate carbamoyl phosphate. K85 serves as a coordination point for L-aspartate. 3 residues coordinate carbamoyl phosphate: R107, H141, and Q144. L-aspartate contacts are provided by R174 and R228. The carbamoyl phosphate site is built by G269 and P270.

It belongs to the aspartate/ornithine carbamoyltransferase superfamily. ATCase family. As to quaternary structure, heterododecamer (2C3:3R2) of six catalytic PyrB chains organized as two trimers (C3), and six regulatory PyrI chains organized as three dimers (R2).

It catalyses the reaction carbamoyl phosphate + L-aspartate = N-carbamoyl-L-aspartate + phosphate + H(+). Its pathway is pyrimidine metabolism; UMP biosynthesis via de novo pathway; (S)-dihydroorotate from bicarbonate: step 2/3. Its function is as follows. Catalyzes the condensation of carbamoyl phosphate and aspartate to form carbamoyl aspartate and inorganic phosphate, the committed step in the de novo pyrimidine nucleotide biosynthesis pathway. The chain is Aspartate carbamoyltransferase catalytic subunit from Mycobacterium ulcerans (strain Agy99).